A 364-amino-acid polypeptide reads, in one-letter code: Histidinol-phosphate aminotransferase (364 aa).

N6-(pyridoxal phosphate)lysine is present on Lys-226.

This sequence belongs to the class-II pyridoxal-phosphate-dependent aminotransferase family. Histidinol-phosphate aminotransferase subfamily. As to quaternary structure, homodimer. Pyridoxal 5'-phosphate is required as a cofactor.

It carries out the reaction L-histidinol phosphate + 2-oxoglutarate = 3-(imidazol-4-yl)-2-oxopropyl phosphate + L-glutamate. It functions in the pathway amino-acid biosynthesis; L-histidine biosynthesis; L-histidine from 5-phospho-alpha-D-ribose 1-diphosphate: step 7/9. In Campylobacter jejuni subsp. jejuni serotype O:23/36 (strain 81-176), this protein is Histidinol-phosphate aminotransferase.